We begin with the raw amino-acid sequence, 215 residues long: Probable nicotinate-nucleotide adenylyltransferase (215 aa).

It belongs to the NadD family.

The catalysed reaction is nicotinate beta-D-ribonucleotide + ATP + H(+) = deamido-NAD(+) + diphosphate. The protein operates within cofactor biosynthesis; NAD(+) biosynthesis; deamido-NAD(+) from nicotinate D-ribonucleotide: step 1/1. Its function is as follows. Catalyzes the reversible adenylation of nicotinate mononucleotide (NaMN) to nicotinic acid adenine dinucleotide (NaAD). This chain is Probable nicotinate-nucleotide adenylyltransferase, found in Gluconacetobacter diazotrophicus (strain ATCC 49037 / DSM 5601 / CCUG 37298 / CIP 103539 / LMG 7603 / PAl5).